Here is a 394-residue protein sequence, read N- to C-terminus: Phosphopentomutase (394 aa).

The Mn(2+) site is built by Asp13, Asp286, His291, Asp327, His328, and His339.

It belongs to the phosphopentomutase family. Mn(2+) is required as a cofactor.

It is found in the cytoplasm. The catalysed reaction is 2-deoxy-alpha-D-ribose 1-phosphate = 2-deoxy-D-ribose 5-phosphate. The enzyme catalyses alpha-D-ribose 1-phosphate = D-ribose 5-phosphate. It functions in the pathway carbohydrate degradation; 2-deoxy-D-ribose 1-phosphate degradation; D-glyceraldehyde 3-phosphate and acetaldehyde from 2-deoxy-alpha-D-ribose 1-phosphate: step 1/2. Its function is as follows. Isomerase that catalyzes the conversion of deoxy-ribose 1-phosphate (dRib-1-P) and ribose 1-phosphate (Rib-1-P) to deoxy-ribose 5-phosphate (dRib-5-P) and ribose 5-phosphate (Rib-5-P), respectively. This chain is Phosphopentomutase, found in Bacillus cereus (strain B4264).